Reading from the N-terminus, the 265-residue chain is 1-(5-phosphoribosyl)-5-[(5-phosphoribosylamino)methylideneamino] imidazole-4-carboxamide isomerase (265 aa).

The Proton acceptor role is filled by Asp-8. Catalysis depends on Asp-139, which acts as the Proton donor.

The protein belongs to the HisA/HisF family.

The protein resides in the cytoplasm. The catalysed reaction is 1-(5-phospho-beta-D-ribosyl)-5-[(5-phospho-beta-D-ribosylamino)methylideneamino]imidazole-4-carboxamide = 5-[(5-phospho-1-deoxy-D-ribulos-1-ylimino)methylamino]-1-(5-phospho-beta-D-ribosyl)imidazole-4-carboxamide. It functions in the pathway amino-acid biosynthesis; L-histidine biosynthesis; L-histidine from 5-phospho-alpha-D-ribose 1-diphosphate: step 4/9. The protein is 1-(5-phosphoribosyl)-5-[(5-phosphoribosylamino)methylideneamino] imidazole-4-carboxamide isomerase of Herminiimonas arsenicoxydans.